The sequence spans 196 residues: Phosphoheptose isomerase (196 aa).

The SIS domain occupies 36–196 (MAQALQAEGK…LIDQHLFGGA (161 aa)). 51-53 (NGG) is a substrate binding site. Zn(2+) is bound by residues His60 and Glu64. Residues Glu64, 93–94 (ND), 119–121 (STS), Ser124, and Gln174 contribute to the substrate site. 2 residues coordinate Zn(2+): Gln174 and His182.

This sequence belongs to the SIS family. GmhA subfamily. As to quaternary structure, homotetramer. Zn(2+) serves as cofactor.

It is found in the cytoplasm. The enzyme catalyses 2 D-sedoheptulose 7-phosphate = D-glycero-alpha-D-manno-heptose 7-phosphate + D-glycero-beta-D-manno-heptose 7-phosphate. It participates in carbohydrate biosynthesis; D-glycero-D-manno-heptose 7-phosphate biosynthesis; D-glycero-alpha-D-manno-heptose 7-phosphate and D-glycero-beta-D-manno-heptose 7-phosphate from sedoheptulose 7-phosphate: step 1/1. Functionally, catalyzes the isomerization of sedoheptulose 7-phosphate in D-glycero-D-manno-heptose 7-phosphate. In Alkalilimnicola ehrlichii (strain ATCC BAA-1101 / DSM 17681 / MLHE-1), this protein is Phosphoheptose isomerase.